A 360-amino-acid chain; its full sequence is Inhibin alpha chain (360 aa).

An N-terminal signal peptide occupies residues methionine 1–glycine 17. Positions cysteine 18–arginine 60 are excised as a propeptide. Positions histidine 61 to arginine 226 are cleaved as a propeptide — inhibin alpha N-terminal region. Residues asparagine 140 and asparagine 262 are each glycosylated (N-linked (GlcNAc...) asparagine). 3 cysteine pairs are disulfide-bonded: cysteine 256/cysteine 322, cysteine 285/cysteine 357, and cysteine 289/cysteine 359.

The protein belongs to the TGF-beta family. As to quaternary structure, dimeric, linked by one or more disulfide bonds. Activin B is a dimer of alpha and beta-B. Inhibin A is a dimer of alpha and beta-A. Inhibin B is a dimer of alpha and beta-B. Interacts with TGFBR3L; this interaction regulates female fertility. Post-translationally, proteolytic processing yields a number of bioactive forms, consisting either solely of the mature alpha chain, of the most N-terminal propeptide linked through a disulfide bond to the mature alpha chain, or of the entire proprotein.

The protein resides in the secreted. Functionally, inhibins and activins inhibit and activate, respectively, the secretion of follitropin by the pituitary gland. Inhibins/activins are involved in regulating a number of diverse functions such as hypothalamic and pituitary hormone secretion, gonadal hormone secretion, germ cell development and maturation, erythroid differentiation, insulin secretion, nerve cell survival, embryonic axial development or bone growth, depending on their subunit composition. Inhibins appear to oppose the functions of activins. Inhibin A is a dimer of alpha/INHA and beta-A/INHBA that functions as a feedback regulator in the hypothalamic-pituitary-gonadal (HPG) axis. Inhibits the secretion of FSH from the anterior pituitary gland by acting on pituitary gonadotrope cells. Antagonizes activin A by binding to the proteoglycan, betaglycan, and forming a stable complex with and, thereby, sequestering type II activin receptors while excluding type I receptor. Its function is as follows. Inhibin B is a dimer of alpha and beta-B that plays a crucial role in the regulation of the reproductive system by inhibiting the secretion of follicle-stimulating hormone (FSH) from the anterior pituitary gland. Thereby, maintains reproductive homeostasis in both males and females. Acts as a more potent suppressor of FSH release than inhibin A. Functions as competitive receptor antagonist binding activin type II receptors with high affinity in the presence of the TGF-beta type III coreceptor/TGFBR3L. In Bos taurus (Bovine), this protein is Inhibin alpha chain (INHA).